The following is a 142-amino-acid chain: Immunity protein WapI (142 aa).

Its function is as follows. Immunity protein component of a toxin-immunity protein module, which functions as a cellular contact-dependent growth inhibition (CDI) system. Neutralizes the tRNase activity of cognate toxin WapA upon expression in E.coli. Does not inhibit WapA from other strains of B.subtilis. The WapA C-terminus cannot be expressed on its own in E.coli, however it can be cloned in the presence of its cognate immunity protein gene. Cell contact is necessary for growth inhibition. Unlike the LXG toxin-immunity modules, WapAI mediates competition under shaking culture conditions. The chain is Immunity protein WapI (wapI) from Bacillus subtilis (strain 168).